Reading from the N-terminus, the 1255-residue chain is DNA-directed RNA polymerase subunit beta' (1255 aa).

4 residues coordinate Zn(2+): C68, C70, C83, and C86. 3 residues coordinate Mg(2+): D457, D459, and D461. Zn(2+)-binding residues include C803, C885, C892, and C895. Residues 1220 to 1240 (NSDEEVSFTEDEYFEDEENDL) are compositionally biased toward acidic residues. The segment at 1220–1255 (NSDEEVSFTEDEYFEDEENDLSTENFDDLKFSEEEE) is disordered. Residues 1246 to 1255 (DDLKFSEEEE) are compositionally biased toward basic and acidic residues.

The protein belongs to the RNA polymerase beta' chain family. In terms of assembly, the RNAP catalytic core consists of 2 alpha, 1 beta, 1 beta' and 1 omega subunit. When a sigma factor is associated with the core the holoenzyme is formed, which can initiate transcription. It depends on Mg(2+) as a cofactor. Zn(2+) is required as a cofactor.

It carries out the reaction RNA(n) + a ribonucleoside 5'-triphosphate = RNA(n+1) + diphosphate. Its function is as follows. DNA-dependent RNA polymerase catalyzes the transcription of DNA into RNA using the four ribonucleoside triphosphates as substrates. The chain is DNA-directed RNA polymerase subunit beta' from Lachnoclostridium phytofermentans (strain ATCC 700394 / DSM 18823 / ISDg) (Clostridium phytofermentans).